We begin with the raw amino-acid sequence, 557 residues long: Isocitrate lyase (557 aa).

At Thr-53 the chain carries Phosphothreonine. A substrate-binding site is contributed by 106–108 (SGW). A Mg(2+)-binding site is contributed by Asp-179. Catalysis depends on Cys-217, which acts as the Proton acceptor. Substrate contacts are provided by residues 218-219 (GH), Arg-254, 437-441 (NLSPS), and Thr-471.

The protein belongs to the isocitrate lyase/PEP mutase superfamily. Isocitrate lyase family. As to quaternary structure, homotetramer. Requires Mg(2+) as cofactor. Phosphorylated in response to elevated glucose levels, leading first to reversible inactivation of the enzyme (short-term inactivation), and at a later stage to proteolytic degradation of the protein (long-term inactivation).

It is found in the cytoplasm. It localises to the secreted. Its subcellular location is the extracellular space. The protein resides in the extracellular matrix. The protein localises to the vacuole. It carries out the reaction D-threo-isocitrate = glyoxylate + succinate. The enzyme catalyses (2S,3R)-3-hydroxybutane-1,2,3-tricarboxylate = pyruvate + succinate. It functions in the pathway carbohydrate metabolism; glyoxylate cycle; (S)-malate from isocitrate: step 1/2. Phosphorylated and inactivated after addition of glucose to the cell culture (repressing conditions). In terms of biological role, catalyzes the formation of succinate and glyoxylate from isocitrate, a key step of the glyoxylate cycle, which operates as an anaplerotic route for replenishing the tricarboxylic acid cycle. Required for growth on ethanol or acetate, but dispensable when fermentable carbon sources are available. Also acts on 2-methylisocitrate. This chain is Isocitrate lyase, found in Saccharomyces cerevisiae (strain ATCC 204508 / S288c) (Baker's yeast).